Consider the following 227-residue polypeptide: Cytochrome c oxidase subunit 2 (227 aa).

The Mitochondrial intermembrane portion of the chain corresponds to 1 to 14 (MAYPFQLGLQDATS). Residues 15-45 (PIMEELTNFHDHTLMIVFLISSLVLYIISLM) traverse the membrane as a helical segment. The Mitochondrial matrix portion of the chain corresponds to 46 to 59 (LTTKLTHTSTMDAQ). The chain crosses the membrane as a helical span at residues 60-87 (EVETIWTILPAAILILIALPSLRILYMM). Over 88-227 (DEINNPVLTV…YFENWSTSMI (140 aa)) the chain is Mitochondrial intermembrane. Cu cation-binding residues include His-161, Cys-196, Glu-198, Cys-200, His-204, and Met-207. Mg(2+) is bound at residue Glu-198. At Tyr-218 the chain carries Phosphotyrosine.

The protein belongs to the cytochrome c oxidase subunit 2 family. Component of the cytochrome c oxidase (complex IV, CIV), a multisubunit enzyme composed of 14 subunits. The complex is composed of a catalytic core of 3 subunits MT-CO1, MT-CO2 and MT-CO3, encoded in the mitochondrial DNA, and 11 supernumerary subunits COX4I, COX5A, COX5B, COX6A, COX6B, COX6C, COX7A, COX7B, COX7C, COX8 and NDUFA4, which are encoded in the nuclear genome. The complex exists as a monomer or a dimer and forms supercomplexes (SCs) in the inner mitochondrial membrane with NADH-ubiquinone oxidoreductase (complex I, CI) and ubiquinol-cytochrome c oxidoreductase (cytochrome b-c1 complex, complex III, CIII), resulting in different assemblies (supercomplex SCI(1)III(2)IV(1) and megacomplex MCI(2)III(2)IV(2)). Found in a complex with TMEM177, COA6, COX18, COX20, SCO1 and SCO2. Interacts with TMEM177 in a COX20-dependent manner. Interacts with COX20. Interacts with COX16. It depends on Cu cation as a cofactor.

Its subcellular location is the mitochondrion inner membrane. The enzyme catalyses 4 Fe(II)-[cytochrome c] + O2 + 8 H(+)(in) = 4 Fe(III)-[cytochrome c] + 2 H2O + 4 H(+)(out). Component of the cytochrome c oxidase, the last enzyme in the mitochondrial electron transport chain which drives oxidative phosphorylation. The respiratory chain contains 3 multisubunit complexes succinate dehydrogenase (complex II, CII), ubiquinol-cytochrome c oxidoreductase (cytochrome b-c1 complex, complex III, CIII) and cytochrome c oxidase (complex IV, CIV), that cooperate to transfer electrons derived from NADH and succinate to molecular oxygen, creating an electrochemical gradient over the inner membrane that drives transmembrane transport and the ATP synthase. Cytochrome c oxidase is the component of the respiratory chain that catalyzes the reduction of oxygen to water. Electrons originating from reduced cytochrome c in the intermembrane space (IMS) are transferred via the dinuclear copper A center (CU(A)) of subunit 2 and heme A of subunit 1 to the active site in subunit 1, a binuclear center (BNC) formed by heme A3 and copper B (CU(B)). The BNC reduces molecular oxygen to 2 water molecules using 4 electrons from cytochrome c in the IMS and 4 protons from the mitochondrial matrix. The sequence is that of Cytochrome c oxidase subunit 2 (MT-CO2) from Arvicanthis somalicus (Neumann's grass rat).